We begin with the raw amino-acid sequence, 229 residues long: Probable calcium-binding protein CML22 (229 aa).

EF-hand domains are found at residues 53 to 88 (EGLR…LKLS), 89 to 124 (LSDE…IYLL), 145 to 180 (SIFD…EDYP), and 184 to 219 (SPSH…WVGL). Residues D66, D68, N70, T72, and E77 each coordinate Ca(2+).

Potential calcium sensor. The sequence is that of Probable calcium-binding protein CML22 (CML22) from Arabidopsis thaliana (Mouse-ear cress).